The following is a 659-amino-acid chain: Mannosyl-oligosaccharide 1,2-alpha-mannosidase IA (659 aa).

At 1-48 the chain is on the cytoplasmic side; it reads MPVGGLLPLFSSPAGGGLGGGLGGGLGGGGGGGGRKGSGPSAFRLTEK. The chain crosses the membrane as a helical; Signal-anchor for type II membrane protein span at residues 49–69; that stretch reads FVLLLVFSAFITLCFGAIFFL. Residues 70 to 659 lie on the Lumenal side of the membrane; that stretch reads PDSSKLLSGV…NIKKVEDNEK (590 aa). The interval 88–121 is disordered; the sequence is QPAADHKPGPGARAEDAADGRARPGEEGAPGDPA. Residues 91–113 show a composition bias toward basic and acidic residues; it reads ADHKPGPGARAEDAADGRARPGE. A disulfide bond links Cys482 and Cys514. The active-site Proton donor is Glu528. Ca(2+) is bound at residue Thr639.

Belongs to the glycosyl hydrolase 47 family. The cofactor is Ca(2+).

Its subcellular location is the endoplasmic reticulum membrane. It carries out the reaction N(4)-(alpha-D-Man-(1-&gt;2)-alpha-D-Man-(1-&gt;2)-alpha-D-Man-(1-&gt;3)-[alpha-D-Man-(1-&gt;2)-alpha-D-Man-(1-&gt;3)-[alpha-D-Man-(1-&gt;2)-alpha-D-Man-(1-&gt;6)]-alpha-D-Man-(1-&gt;6)]-beta-D-Man-(1-&gt;4)-beta-D-GlcNAc-(1-&gt;4)-beta-D-GlcNAc)-L-asparaginyl-[protein] (N-glucan mannose isomer 9A1,2,3B1,2,3) + 4 H2O = N(4)-(alpha-D-Man-(1-&gt;3)-[alpha-D-Man-(1-&gt;3)-[alpha-D-Man-(1-&gt;6)]-alpha-D-Man-(1-&gt;6)]-beta-D-Man-(1-&gt;4)-beta-D-GlcNAc-(1-&gt;4)-beta-D-GlcNAc)-L-asparaginyl-[protein] (N-glucan mannose isomer 5A1,2) + 4 beta-D-mannose. It catalyses the reaction N(4)-(alpha-D-Man-(1-&gt;2)-alpha-D-Man-(1-&gt;2)-alpha-D-Man-(1-&gt;3)-[alpha-D-Man-(1-&gt;3)-[alpha-D-Man-(1-&gt;2)-alpha-D-Man-(1-&gt;6)]-alpha-D-Man-(1-&gt;6)]-beta-D-Man-(1-&gt;4)-beta-D-GlcNAc-(1-&gt;4)-beta-D-GlcNAc)-L-asparaginyl-[protein] (N-glucan mannose isomer 8A1,2,3B1,3) + 3 H2O = N(4)-(alpha-D-Man-(1-&gt;3)-[alpha-D-Man-(1-&gt;3)-[alpha-D-Man-(1-&gt;6)]-alpha-D-Man-(1-&gt;6)]-beta-D-Man-(1-&gt;4)-beta-D-GlcNAc-(1-&gt;4)-beta-D-GlcNAc)-L-asparaginyl-[protein] (N-glucan mannose isomer 5A1,2) + 3 beta-D-mannose. The protein operates within protein modification; protein glycosylation. Its activity is regulated as follows. Inhibited by both 1-deoxymannojirimycin and kifunensine. In terms of biological role, involved in the maturation of Asn-linked oligosaccharides. Progressively trim alpha-1,2-linked mannose residues from Man(9)GlcNAc(2) to produce Man(5)GlcNAc(2). This is Mannosyl-oligosaccharide 1,2-alpha-mannosidase IA (MAN1A1) from Sus scrofa (Pig).